A 211-amino-acid chain; its full sequence is MIRATSVKGQHRWSEAAADTVVLDFDDRHRRRTAMVGTRGLQFLLDLEHAVALRGGDALVLEDGRLVEVVAAAEPLIEIRGSDPKELVRIAWHLGNRHLPTQIMAKGLRIRRDHVIEEMVQGLGAKTVEIEAPFDPEGGAYAPPAEPSHDHAGHDHAHDSHAHHDHDHGKHAQHDHGKHDHAHHDHAAHDDHHVHDEHCGHDHHGHGHEHK.

The disordered stretch occupies residues 134 to 211 (FDPEGGAYAP…DHHGHGHEHK (78 aa)). Residues 147-202 (PSHDHAGHDHAHDSHAHHDHDHGKHAQHDHGKHDHAHHDHAAHDDHHVHDEHCGHD) are compositionally biased toward basic and acidic residues.

The protein belongs to the UreE family.

Its subcellular location is the cytoplasm. Functionally, involved in urease metallocenter assembly. Binds nickel. Probably functions as a nickel donor during metallocenter assembly. The protein is Urease accessory protein UreE of Rhodopseudomonas palustris (strain BisB18).